A 464-amino-acid chain; its full sequence is L-2-hydroxyglutarate dehydrogenase, mitochondrial (464 aa).

Residues 1–52 (MWPTLRYVGGVCGLARYCVAGGFLRASGPASGVPGLLCGGGRRSSSTSSFDI) constitute a mitochondrion transit peptide. 2 positions are modified to N6-acetyllysine: K105 and K174.

It belongs to the L2HGDH family. FAD serves as cofactor.

The protein resides in the mitochondrion. It carries out the reaction (S)-2-hydroxyglutarate + A = 2-oxoglutarate + AH2. The polypeptide is L-2-hydroxyglutarate dehydrogenase, mitochondrial (L2hgdh) (Mus musculus (Mouse)).